The sequence spans 292 residues: Tubulin beta chain (292 aa).

GTP-binding residues include Asn49 and Asn71. The disordered stretch occupies residues 265–292; it reads SEYQQYQDATAEEEGEFDEEEEGDEEAA. The span at 274-292 shows a compositional bias: acidic residues; sequence TAEEEGEFDEEEEGDEEAA.

The protein belongs to the tubulin family. As to quaternary structure, dimer of alpha and beta chains. A typical microtubule is a hollow water-filled tube with an outer diameter of 25 nm and an inner diameter of 15 nM. Alpha-beta heterodimers associate head-to-tail to form protofilaments running lengthwise along the microtubule wall with the beta-tubulin subunit facing the microtubule plus end conferring a structural polarity. Microtubules usually have 13 protofilaments but different protofilament numbers can be found in some organisms and specialized cells. It depends on Mg(2+) as a cofactor.

Its subcellular location is the cytoplasm. The protein localises to the cytoskeleton. Functionally, tubulin is the major constituent of microtubules, a cylinder consisting of laterally associated linear protofilaments composed of alpha- and beta-tubulin heterodimers. Microtubules grow by the addition of GTP-tubulin dimers to the microtubule end, where a stabilizing cap forms. Below the cap, tubulin dimers are in GDP-bound state, owing to GTPase activity of alpha-tubulin. The sequence is that of Tubulin beta chain from Strongylocentrotus purpuratus (Purple sea urchin).